The primary structure comprises 58 residues: UPF0391 membrane protein Sden_3712 (58 aa).

The next 2 membrane-spanning stretches (helical) occupy residues 6–26 (LTFLVIALVAGVLGFTGIAGA) and 27–47 (AAGIAKIIFFVFVVLLLISLV).

This sequence belongs to the UPF0391 family.

Its subcellular location is the cell membrane. This is UPF0391 membrane protein Sden_3712 from Shewanella denitrificans (strain OS217 / ATCC BAA-1090 / DSM 15013).